The primary structure comprises 233 residues: C-type lectin domain family 2 member D2 (233 aa).

A disordered region spans residues 1 to 34 (MPSSAHLQDAPPLLSRTLTQDEEQTSLRQSSSCG). Over 1–76 (MPSSAHLQDA…SPESPAKLPC (76 aa)) the chain is Cytoplasmic. Residues 77 to 97 (CYGVIMVLSVAVVALSVALSV) traverse the membrane as a helical; Signal-anchor for type II membrane protein segment. The Extracellular portion of the chain corresponds to 98–233 (KKTPQILTVK…KPNSYTSQCQ (136 aa)). Positions 119-228 (VGNKCYYFNE…KSICSKPNSY (110 aa)) constitute a C-type lectin domain. Asn-132 carries N-linked (GlcNAc...) asparagine glycosylation.

It is found in the cell membrane. Its function is as follows. Lectin-type cell surface receptor. This chain is C-type lectin domain family 2 member D2 (Clec2d2), found in Rattus norvegicus (Rat).